A 217-amino-acid polypeptide reads, in one-letter code: Large ribosomal subunit protein uL16 (217 aa).

It belongs to the universal ribosomal protein uL16 family. As to quaternary structure, component of the small ribosomal subunit. Mature ribosomes consist of a small (40S) and a large (60S) subunit. The 40S subunit contains about 33 different proteins and 1 molecule of RNA (18S). The 60S subunit contains about 49 different proteins and 3 molecules of RNA (25S, 5.8S and 5S).

This Dictyostelium discoideum (Social amoeba) protein is Large ribosomal subunit protein uL16 (rpl10).